The following is a 163-amino-acid chain: NADH-quinone oxidoreductase subunit I (163 aa).

4Fe-4S ferredoxin-type domains lie at 53–83 (LRRY…IEAG) and 94–123 (VRYD…EGPN). [4Fe-4S] cluster-binding residues include cysteine 63, cysteine 66, cysteine 69, cysteine 73, cysteine 103, cysteine 106, cysteine 109, and cysteine 113.

It belongs to the complex I 23 kDa subunit family. As to quaternary structure, NDH-1 is composed of 14 different subunits. Subunits NuoA, H, J, K, L, M, N constitute the membrane sector of the complex. [4Fe-4S] cluster is required as a cofactor.

Its subcellular location is the cell inner membrane. The catalysed reaction is a quinone + NADH + 5 H(+)(in) = a quinol + NAD(+) + 4 H(+)(out). NDH-1 shuttles electrons from NADH, via FMN and iron-sulfur (Fe-S) centers, to quinones in the respiratory chain. The immediate electron acceptor for the enzyme in this species is believed to be ubiquinone. Couples the redox reaction to proton translocation (for every two electrons transferred, four hydrogen ions are translocated across the cytoplasmic membrane), and thus conserves the redox energy in a proton gradient. This chain is NADH-quinone oxidoreductase subunit I, found in Allorhizobium ampelinum (strain ATCC BAA-846 / DSM 112012 / S4) (Agrobacterium vitis (strain S4)).